Reading from the N-terminus, the 476-residue chain is tRNA (cytosine(72)-C(5))-methyltransferase NSUN6 (476 aa).

Positions 111 to 203 (QGEVIVGAQC…IGIRMTEPIY (93 aa)) constitute a PUA domain. S-adenosyl-L-methionine is bound by residues 242-248 (CAAPGGK), Asp-266, Asp-293, and Asp-323. Residue Cys-373 is the Nucleophile of the active site. Lys-419 is subject to N6-acetyllysine.

It belongs to the class I-like SAM-binding methyltransferase superfamily. RsmB/NOP family.

The protein localises to the cytoplasm. It carries out the reaction cytidine(72) in tRNA(Thr) + S-adenosyl-L-methionine = 5-methylcytidine(72) in tRNA(Thr) + S-adenosyl-L-homocysteine + H(+). It catalyses the reaction cytidine(72) in tRNA(Cys) + S-adenosyl-L-methionine = 5-methylcytidine(72) in tRNA(Cys) + S-adenosyl-L-homocysteine + H(+). In terms of biological role, S-adenosyl-L-methionine-dependent methyltransferase that specifically methylates the C5 position of cytosine 72 in tRNA(Thr)(TGT) and tRNA(Cys)(GCA). In vitro also methylates tRNA(Thr)(AGT). Methylation requires, in the acceptor stem region, the presence of the 3'-CCA terminus, the target site C72, the discriminator base U73, and the second and third base pairs (2:71 and 3:70) in the tRNA substrates. The polypeptide is tRNA (cytosine(72)-C(5))-methyltransferase NSUN6 (Mus musculus (Mouse)).